The chain runs to 408 residues: Tyrosine--tRNA ligase (408 aa).

Residues 50-59 (PTGKDLTLGH) carry the 'HIGH' region motif. A 'KMSKS' region motif is present at residues 234-238 (KMSKS). ATP is bound at residue lysine 237. The S4 RNA-binding domain occupies 346-407 (MQAARVLFTA…GKRKYGRVVL (62 aa)).

This sequence belongs to the class-I aminoacyl-tRNA synthetase family. TyrS type 2 subfamily. As to quaternary structure, homodimer.

The protein resides in the cytoplasm. The enzyme catalyses tRNA(Tyr) + L-tyrosine + ATP = L-tyrosyl-tRNA(Tyr) + AMP + diphosphate + H(+). In terms of biological role, catalyzes the attachment of tyrosine to tRNA(Tyr) in a two-step reaction: tyrosine is first activated by ATP to form Tyr-AMP and then transferred to the acceptor end of tRNA(Tyr). The protein is Tyrosine--tRNA ligase of Symbiobacterium thermophilum (strain DSM 24528 / JCM 14929 / IAM 14863 / T).